A 238-amino-acid chain; its full sequence is Ribosomal RNA small subunit methyltransferase I (238 aa).

Belongs to the methyltransferase superfamily. RsmI family.

Its subcellular location is the cytoplasm. The enzyme catalyses cytidine(1402) in 16S rRNA + S-adenosyl-L-methionine = 2'-O-methylcytidine(1402) in 16S rRNA + S-adenosyl-L-homocysteine + H(+). Functionally, catalyzes the 2'-O-methylation of the ribose of cytidine 1402 (C1402) in 16S rRNA. The polypeptide is Ribosomal RNA small subunit methyltransferase I (Mesomycoplasma conjunctivae (strain ATCC 25834 / NCTC 10147 / HRC/581) (Mycoplasma conjunctivae)).